The following is a 717-amino-acid chain: DNA-directed RNA polymerase subunit beta' (717 aa).

4 residues coordinate Zn(2+): Cys71, Cys73, Cys91, and Cys94. Mg(2+) is bound by residues Asp481, Asp483, and Asp485.

This sequence belongs to the RNA polymerase beta' chain family. RpoC1 subfamily. In plastids the minimal PEP RNA polymerase catalytic core is composed of four subunits: alpha, beta, beta', and beta''. When a (nuclear-encoded) sigma factor is associated with the core the holoenzyme is formed, which can initiate transcription. Mg(2+) serves as cofactor. It depends on Zn(2+) as a cofactor.

It is found in the plastid. It localises to the chloroplast. The enzyme catalyses RNA(n) + a ribonucleoside 5'-triphosphate = RNA(n+1) + diphosphate. Its function is as follows. DNA-dependent RNA polymerase catalyzes the transcription of DNA into RNA using the four ribonucleoside triphosphates as substrates. The chain is DNA-directed RNA polymerase subunit beta' from Chlorokybus atmophyticus (Soil alga).